The sequence spans 356 residues: Fructose-1,6-bisphosphatase class 1 (356 aa).

The interval 1 to 26 (MAREWPMTHPSNHPMDHHHQTLQAHL) is disordered. E101, D120, L122, and D123 together coordinate Mg(2+). Substrate contacts are provided by residues 123 to 126 (DGSS) and N211. A Mg(2+)-binding site is contributed by E283.

Belongs to the FBPase class 1 family. As to quaternary structure, homotetramer. Requires Mg(2+) as cofactor.

Its subcellular location is the cytoplasm. The catalysed reaction is beta-D-fructose 1,6-bisphosphate + H2O = beta-D-fructose 6-phosphate + phosphate. The protein operates within carbohydrate biosynthesis; Calvin cycle. This chain is Fructose-1,6-bisphosphatase class 1, found in Bradyrhizobium sp. (strain ORS 278).